The chain runs to 74 residues: Putative antitoxin VapB48 (74 aa).

Its function is as follows. Possibly the antitoxin component of a type II toxin-antitoxin (TA) system. Its cognate toxin is VapC48 (Potential). This Mycobacterium tuberculosis (strain CDC 1551 / Oshkosh) protein is Putative antitoxin VapB48 (vapB48).